The sequence spans 336 residues: Tetraacyldisaccharide 4'-kinase (336 aa).

Position 60 to 67 (threonine 60 to threonine 67) interacts with ATP.

It belongs to the LpxK family.

It catalyses the reaction a lipid A disaccharide + ATP = a lipid IVA + ADP + H(+). The protein operates within glycolipid biosynthesis; lipid IV(A) biosynthesis; lipid IV(A) from (3R)-3-hydroxytetradecanoyl-[acyl-carrier-protein] and UDP-N-acetyl-alpha-D-glucosamine: step 6/6. Its function is as follows. Transfers the gamma-phosphate of ATP to the 4'-position of a tetraacyldisaccharide 1-phosphate intermediate (termed DS-1-P) to form tetraacyldisaccharide 1,4'-bis-phosphate (lipid IVA). In Pseudomonas fluorescens (strain SBW25), this protein is Tetraacyldisaccharide 4'-kinase.